A 451-amino-acid chain; its full sequence is NADH-quinone oxidoreductase subunit H (451 aa).

The next 9 membrane-spanning stretches (helical) occupy residues 30–50, 98–118, 138–158, 176–196, 213–233, 262–282, 302–322, 336–356, and 368–388; these read LIIV…LFMI, AVFI…FAVI, LPVA…GIVL, AAQV…VFLY, WGIL…VGET, LFYL…TTLF, WWPV…FIWL, QFGW…EAAI, and VIPF…ADLV.

This sequence belongs to the complex I subunit 1 family. In terms of assembly, NDH-1 is composed of 14 different subunits. Subunits NuoA, H, J, K, L, M, N constitute the membrane sector of the complex.

The protein resides in the cell membrane. The enzyme catalyses a quinone + NADH + 5 H(+)(in) = a quinol + NAD(+) + 4 H(+)(out). NDH-1 shuttles electrons from NADH, via FMN and iron-sulfur (Fe-S) centers, to quinones in the respiratory chain. The immediate electron acceptor for the enzyme in this species is believed to be ubiquinone. Couples the redox reaction to proton translocation (for every two electrons transferred, four hydrogen ions are translocated across the cytoplasmic membrane), and thus conserves the redox energy in a proton gradient. This subunit may bind ubiquinone. The sequence is that of NADH-quinone oxidoreductase subunit H from Acidothermus cellulolyticus (strain ATCC 43068 / DSM 8971 / 11B).